The sequence spans 465 residues: Cysteine--tRNA ligase (465 aa).

Cys-27 serves as a coordination point for Zn(2+). The short motif at 29–39 (PTVYDEVHIGH) is the 'HIGH' region element. Zn(2+) contacts are provided by Cys-204, His-229, and Glu-233. Residues 261 to 265 (KMSKS) carry the 'KMSKS' region motif. Lys-264 lines the ATP pocket.

Belongs to the class-I aminoacyl-tRNA synthetase family. The cofactor is Zn(2+).

It is found in the cytoplasm. It carries out the reaction tRNA(Cys) + L-cysteine + ATP = L-cysteinyl-tRNA(Cys) + AMP + diphosphate. The polypeptide is Cysteine--tRNA ligase (Metallosphaera sedula (strain ATCC 51363 / DSM 5348 / JCM 9185 / NBRC 15509 / TH2)).